The chain runs to 343 residues: MAKWLRDYLNLGSRRPPPQPPTPDYTESDILRAYREQKDLDFEDPYEDSNGRAEPEVTGSGDPKYNSPRHRLIKVEAADMARAKALLGSPGEEPEAETEYSDPFDAQPQPPAPNSGYMEPYDARSVSSEQPSRAVQLYDTPYEEQATKPEDGGSSGQSRRPLEDERPADEYDQPWEWKKDHISRAFAVQFDGPDWERTPCSTKEPWRPQPAERVDTALALEKQPWFHGPLSRAEAENLLSLCKEGSYLVRLSETRAQDCILSLRSNQGSMHLKFARTRENQVVLGQHSGPFPSIPELVLHYSARPLPVQGAEHLALLYPVTSSQSSQGPCTLAAKPERGQGDP.

A disordered region spans residues 1-176 (MAKWLRDYLN…PADEYDQPWE (176 aa)). Basic and acidic residues-rich tracts occupy residues 29–40 (DILRAYREQKDL) and 73–82 (IKVEAADMAR). Positions 92 to 102 (EEPEAETEYSD) are enriched in acidic residues. Basic and acidic residues predominate over residues 160-176 (RPLEDERPADEYDQPWE). Residues 225–320 (WFHGPLSRAE…AEHLALLYPV (96 aa)) form the SH2 domain. Positions 322-343 (SSQSSQGPCTLAAKPERGQGDP) are disordered.

In terms of processing, tyrosine phosphorylated by ABL. As to expression, specifically expressed in brain.

In terms of biological role, may function as an adapter protein. The sequence is that of SH2 domain-containing adapter protein D (Shd) from Mus musculus (Mouse).